A 106-amino-acid polypeptide reads, in one-letter code: uncharacterized protein (106 aa).

A helical transmembrane segment spans residues 9 to 27; it reads ALAALAFTLGLIGLAAWAL. The segment at 84–106 is disordered; it reads TPKGPPPASALSPSPVAEPEPVV.

This sequence belongs to the FliO/MopB family.

It localises to the cell membrane. The protein resides in the bacterial flagellum basal body. This is an uncharacterized protein from Caulobacter vibrioides (strain ATCC 19089 / CIP 103742 / CB 15) (Caulobacter crescentus).